The following is a 32-amino-acid chain: Cyclotide Hyfl-B (32 aa).

The segment at residues 1–32 (GSPIQCAETCFIGKCYTEELGCTCTAFLCMKN) is a cross-link (cyclopeptide (Gly-Asn)). Cystine bridges form between Cys6/Cys22, Cys10/Cys24, and Cys15/Cys29.

Belongs to the cyclotide family. Moebius subfamily. This is a cyclic peptide.

Probably participates in a plant defense mechanism. The polypeptide is Cyclotide Hyfl-B (Hybanthus floribundus (Greenviolet)).